Consider the following 304-residue polypeptide: DDRGK domain-containing protein 1 (304 aa).

Residues 1 to 2 are Lumenal-facing; sequence MD. A helical membrane pass occupies residues 3–23; that stretch reads LIILVGIAIALLVVIISLYLL. Residues 24-304 are Cytoplasmic-facing; sequence QKKNSTTEAK…LTPVSAEGSS (281 aa). The tract at residues 31-174 is disordered; that stretch reads EAKPAAAAPQ…AERLAKEERE (144 aa). A compositionally biased stretch (low complexity) spans 53-82; sequence RRAQIARNQRNRLRQNAPVAAAAPQAEAPA. Residues 105–174 are compositionally biased toward basic and acidic residues; sequence LDEKMGAKKR…AERLAKEERE (70 aa).

This sequence belongs to the DDRGK1 family. Interacts with Atg9; the interaction is transient.

It localises to the endoplasmic reticulum membrane. Its function is as follows. Substrate adapter for ufmylation, the covalent attachment of the ubiquitin-like modifier UFM1 to substrate proteins. Required for ufmylation of Atg9; protects the nervous system during aging, possibly by stabilizing Atg9 and supporting its function. The chain is DDRGK domain-containing protein 1 from Drosophila ananassae (Fruit fly).